The primary structure comprises 156 residues: Movement protein P17 (156 aa).

A homodimerization region spans residues 38–54; it reads AEDVEEEAIAAQEELEF. An RNA-binding region spans residues 57 to 156; sequence DEAQARHSCL…RAAPKLIKRG (100 aa). Residues Ser-71, Ser-79, Ser-137, and Ser-140 each carry the phosphoserine modification. The interval 106–156 is disordered; sequence ASYFSSSARPLPPPPAPSLMSWTPIAKYHPSSPTSTSSKLRRAAPKLIKRG. The segment covering 144–156 has biased composition (basic residues); the sequence is KLRRAAPKLIKRG.

This sequence belongs to the polerovirus movement protein family. Homodimer. Expressed as a nonphosphorylated 20kDa form and a phosphorylated 22kDa form. Phosphorylated by a host PKC-related kinase. Serine phosphorylation is required for plamodesma targeting.

It localises to the host cell junction. The protein resides in the host plasmodesma. It is found in the host chloroplast envelope. The protein localises to the host Golgi apparatus. Its subcellular location is the host mitochondrion outer membrane. Functionally, together with movement protein P3a, facilitates long-distance movement of virions in host. Transports viral genome to neighboring plant cells directly through plasmosdesmata, without any budding. The movement protein allows efficient cell to cell propagation, by bypassing the host cell wall barrier. Binds ssRNA. The sequence is that of Movement protein P17 from Solanum tuberosum (Potato).